The sequence spans 175 residues: ATP synthase subunit b (175 aa).

A helical transmembrane segment spans residues 13 to 33; it reads LLSPNPGLIFWTAVTFLLLLL.

Belongs to the ATPase B chain family. As to quaternary structure, F-type ATPases have 2 components, F(1) - the catalytic core - and F(0) - the membrane proton channel. F(1) has five subunits: alpha(3), beta(3), gamma(1), delta(1), epsilon(1). F(0) has four main subunits: a(1), b(2) and c(10-14). The alpha and beta chains form an alternating ring which encloses part of the gamma chain. F(1) is attached to F(0) by a central stalk formed by the gamma and epsilon chains, while a peripheral stalk is formed by the delta and b chains.

The protein resides in the cell inner membrane. In terms of biological role, f(1)F(0) ATP synthase produces ATP from ADP in the presence of a proton or sodium gradient. F-type ATPases consist of two structural domains, F(1) containing the extramembraneous catalytic core and F(0) containing the membrane proton channel, linked together by a central stalk and a peripheral stalk. During catalysis, ATP synthesis in the catalytic domain of F(1) is coupled via a rotary mechanism of the central stalk subunits to proton translocation. Functionally, component of the F(0) channel, it forms part of the peripheral stalk, linking F(1) to F(0). The sequence is that of ATP synthase subunit b from Chloroherpeton thalassium (strain ATCC 35110 / GB-78).